The following is a 468-amino-acid chain: Fibrinogen beta chain (468 aa).

The residue at position 1 (Q1) is a Pyrrolidone carboxylic acid. Acidic residues predominate over residues 1–10; sequence QFPTDYDEGQ. The segment at 1–54 is disordered; that stretch reads QFPTDYDEGQDDRPKVGLGARGHRPYDKKKEEAPSLRPVPPPISGGGYRARPAT. O-linked (GalNAc...) threonine glycosylation is present at T4. Y6 carries the post-translational modification Sulfotyrosine. The span at 24–34 shows a compositional bias: basic and acidic residues; sequence RPYDKKKEEAP. A coiled-coil region spans residues 88-204; sequence KLQDTLVRQE…TQMEYCRTPC (117 aa). Intrachain disulfides connect C208/C293 and C218/C247. The Fibrinogen C-terminal domain occupies 209-465; it reads NIPVVSGKEC…KMSMKIRPYF (257 aa). N371 carries an N-linked (GlcNAc...) asparagine glycan. Cysteines 401 and 414 form a disulfide.

As to quaternary structure, heterohexamer; disulfide linked. Contains 2 sets of 3 non-identical chains (alpha, beta and gamma). The 2 heterotrimers are in head to head conformation with the N-termini in a small central domain. Post-translationally, conversion of fibrinogen to fibrin is triggered by thrombin, which cleaves fibrinopeptides A and B from alpha and beta chains, and thus exposes the N-terminal polymerization sites responsible for the formation of the soft clot. The soft clot is converted into the hard clot by factor XIIIA which catalyzes the epsilon-(gamma-glutamyl)lysine cross-linking between gamma chains (stronger) and between alpha chains (weaker) of different monomers. In terms of tissue distribution, detected in blood plasma (at protein level).

The protein resides in the secreted. Cleaved by the protease thrombin to yield monomers which, together with fibrinogen alpha (FGA) and fibrinogen gamma (FGG), polymerize to form an insoluble fibrin matrix. Fibrin has a major function in hemostasis as one of the primary components of blood clots. In addition, functions during the early stages of wound repair to stabilize the lesion and guide cell migration during re-epithelialization. Was originally thought to be essential for platelet aggregation, based on in vitro studies using anticoagulated blood. However subsequent studies have shown that it is not absolutely required for thrombus formation in vivo. Enhances expression of SELP in activated platelets. Maternal fibrinogen is essential for successful pregnancy. Fibrin deposition is also associated with infection, where it protects against IFNG-mediated hemorrhage. May also facilitate the antibacterial immune response via both innate and T-cell mediated pathways. The protein is Fibrinogen beta chain (FGB) of Bos taurus (Bovine).